The chain runs to 181 residues: Iron sulfur cluster assembly protein 1, mitochondrial (181 aa).

The disordered stretch occupies residues 159–181 (RKTKNPTLGAEAAETPAAATATA). Low complexity predominate over residues 168–181 (AEAAETPAAATATA).

It belongs to the NifU family. In terms of assembly, component of the core Fe-S cluster (ISC) assembly machinery. The cofactor is [2Fe-2S] cluster.

The protein resides in the mitochondrion matrix. It participates in cofactor biosynthesis; iron-sulfur cluster biosynthesis. In terms of biological role, scaffold protein for the de novo synthesis of iron-sulfur (Fe-S) clusters within mitochondria, which is required for maturation of both mitochondrial and cytoplasmic [2Fe-2S] and [4Fe-4S] proteins. First, a [2Fe-2S] cluster is transiently assembled on the scaffold protein ISU1. In a second step, the cluster is released from ISU1, transferred to a glutaredoxin, followed by the formation of mitochondrial [2Fe-2S] proteins, the synthesis of [4Fe-4S] clusters and their target-specific insertion into the recipient apoproteins. Cluster assembly on ISU1 depends on the function of the cysteine desulfurase complex NFS1-ISD11, which serves as the sulfur donor for cluster synthesis, the iron-binding protein frataxin as the putative iron donor, and the electron transfer chain comprised of ferredoxin reductase and ferredoxin, which receive their electrons from NADH. The protein is Iron sulfur cluster assembly protein 1, mitochondrial (ISU1) of Yarrowia lipolytica (strain CLIB 122 / E 150) (Yeast).